The chain runs to 586 residues: NudC domain-containing protein 1 (586 aa).

The CS domain maps to 275–364 (KREPLYNWQQ…EPGCTWAELV (90 aa)).

The protein localises to the cytoplasm. It is found in the nucleus. The chain is NudC domain-containing protein 1 from Xenopus laevis (African clawed frog).